The primary structure comprises 1545 residues: Dual oxidase 2 (1545 aa).

The first 25 residues, methionine 1–glycine 25, serve as a signal peptide directing secretion. At glutamine 26–threonine 601 the chain is on the extracellular side. Residues serine 30–proline 596 are peroxidase-like; mediates peroxidase activity. N-linked (GlcNAc...) asparagine glycosylation is found at asparagine 100, asparagine 312, asparagine 348, asparagine 358, asparagine 455, and asparagine 549. Cysteine 124 and cysteine 1159 are disulfide-bonded. Residues isoleucine 602–phenylalanine 622 traverse the membrane as a helical segment. The Cytoplasmic portion of the chain corresponds to arginine 623–arginine 1037. EF-hand domains follow at residues proline 819 to glycine 854, serine 855 to isoleucine 890, and glutamine 899 to glutamate 934. Ca(2+) is bound by residues aspartate 832, aspartate 834, asparagine 836, tyrosine 838, glutamate 843, aspartate 868, aspartate 870, asparagine 872, and glutamate 879. An interaction with TXNDC11 region spans residues arginine 960–arginine 1242. Residues histidine 1038 to tyrosine 1058 traverse the membrane as a helical segment. The Extracellular segment spans residues tyrosine 1059 to phenylalanine 1074. The helical transmembrane segment at valine 1075–threonine 1097 threads the bilayer. The Ferric oxidoreductase domain maps to arginine 1081–serine 1263. The Cytoplasmic segment spans residues methionine 1098 to arginine 1125. Residues tryptophan 1126–isoleucine 1148 form a helical membrane-spanning segment. Residues phenylalanine 1149–glutamine 1182 lie on the Extracellular side of the membrane. Residues threonine 1183–alanine 1203 traverse the membrane as a helical segment. Topologically, residues serine 1204–histidine 1220 are cytoplasmic. The chain crosses the membrane as a helical span at residues phenylalanine 1221–proline 1241. A topological domain (extracellular) is located at residue arginine 1242. A helical membrane pass occupies residues phenylalanine 1243 to serine 1263. The region spanning arginine 1264–glutamate 1370 is the FAD-binding FR-type domain. Topologically, residues arginine 1264–phenylalanine 1545 are cytoplasmic.

The protein in the N-terminal section; belongs to the peroxidase family. Heterodimer with DUOXA2; disulfide-linked. Interacts with TXNDC11, TPO and CYBA. N-glycosylated. In terms of tissue distribution, expressed in thyroid, and the digestive tract especially in stomach, cecum and sigmoidal colon (at protein level). Expressed in thyroid.

The protein localises to the apical cell membrane. It localises to the cell junction. It carries out the reaction NADH + O2 + H(+) = H2O2 + NAD(+). The enzyme catalyses NADPH + O2 + H(+) = H2O2 + NADP(+). The protein operates within hormone biosynthesis; thyroid hormone biosynthesis. Its activity is regulated as follows. The NADPH oxidase activity is calcium-dependent. Peroxidase activity is inhibited by aminobenzohydrazide. Generates hydrogen peroxide which is required for the activity of thyroid peroxidase/TPO and lactoperoxidase/LPO. Plays a role in thyroid hormones synthesis and lactoperoxidase-mediated antimicrobial defense at the surface of mucosa. May have its own peroxidase activity through its N-terminal peroxidase-like domain. This is Dual oxidase 2 (DUOX2) from Sus scrofa (Pig).